Reading from the N-terminus, the 444-residue chain is Ribosomal protein uS12 methylthiotransferase RimO (444 aa).

The region spanning 2 to 118 (LKIALESLGC…IDKILKELSE (117 aa)) is the MTTase N-terminal domain. Residues Cys11, Cys47, Cys81, Cys155, Cys159, and Cys162 each contribute to the [4Fe-4S] cluster site. The Radical SAM core domain occupies 141 to 371 (STPSYMAYLK…MMIQQKISEE (231 aa)). Positions 374–441 (DKKIGKTYEV…EYDLMGDVLY (68 aa)) constitute a TRAM domain.

The protein belongs to the methylthiotransferase family. RimO subfamily. The cofactor is [4Fe-4S] cluster.

It localises to the cytoplasm. The enzyme catalyses L-aspartate(89)-[ribosomal protein uS12]-hydrogen + (sulfur carrier)-SH + AH2 + 2 S-adenosyl-L-methionine = 3-methylsulfanyl-L-aspartate(89)-[ribosomal protein uS12]-hydrogen + (sulfur carrier)-H + 5'-deoxyadenosine + L-methionine + A + S-adenosyl-L-homocysteine + 2 H(+). In terms of biological role, catalyzes the methylthiolation of an aspartic acid residue of ribosomal protein uS12. The chain is Ribosomal protein uS12 methylthiotransferase RimO from Clostridioides difficile (strain 630) (Peptoclostridium difficile).